The sequence spans 235 residues: Nitrile hydratase subunit beta (235 aa).

It belongs to the nitrile hydratase subunit beta family. In terms of assembly, heterodimer of an alpha and a beta chain.

The enzyme catalyses an aliphatic primary amide = an aliphatic nitrile + H2O. Functionally, NHase catalyzes the hydration of various nitrile compounds to the corresponding amides. In Rhodococcus sp, this protein is Nitrile hydratase subunit beta (nthB).